A 272-amino-acid polypeptide reads, in one-letter code: Phosphatidylglycerol--prolipoprotein diacylglyceryl transferase (272 aa).

4 helical membrane passes run 16 to 36, 62 to 82, 97 to 117, and 129 to 149; these read VGLH…LSSF, FALG…VLFY, IWKG…WAAV, and LSVT…ALLI. Residue arginine 150 participates in a 1,2-diacyl-sn-glycero-3-phospho-(1'-sn-glycerol) binding. The next 2 membrane-spanning stretches (helical) occupy residues 206–226 and 246–266; these read GVIR…VAVI and ILTI…GIIW.

Belongs to the Lgt family.

It localises to the cell inner membrane. The catalysed reaction is L-cysteinyl-[prolipoprotein] + a 1,2-diacyl-sn-glycero-3-phospho-(1'-sn-glycerol) = an S-1,2-diacyl-sn-glyceryl-L-cysteinyl-[prolipoprotein] + sn-glycerol 1-phosphate + H(+). The protein operates within protein modification; lipoprotein biosynthesis (diacylglyceryl transfer). Its function is as follows. Catalyzes the transfer of the diacylglyceryl group from phosphatidylglycerol to the sulfhydryl group of the N-terminal cysteine of a prolipoprotein, the first step in the formation of mature lipoproteins. In Chlamydia trachomatis serovar D (strain ATCC VR-885 / DSM 19411 / UW-3/Cx), this protein is Phosphatidylglycerol--prolipoprotein diacylglyceryl transferase.